A 106-amino-acid chain; its full sequence is ATP-dependent Clp protease adapter protein ClpS (106 aa).

This sequence belongs to the ClpS family. As to quaternary structure, binds to the N-terminal domain of the chaperone ClpA.

In terms of biological role, involved in the modulation of the specificity of the ClpAP-mediated ATP-dependent protein degradation. This Vibrio campbellii (strain ATCC BAA-1116) protein is ATP-dependent Clp protease adapter protein ClpS.